Reading from the N-terminus, the 417-residue chain is Histidine biosynthesis bifunctional protein his7 (417 aa).

A phosphoribosyl-AMP cyclohydrolase region spans residues 225–299 (GLVYSSKESV…HLDTLHCFGQ (75 aa)). The phosphoribosyl-ATP pyrophosphohydrolase stretch occupies residues 303 to 387 (LCQLEKTLID…ISRHLDLKHR (85 aa)).

Its subcellular location is the cytoplasm. It catalyses the reaction 1-(5-phospho-beta-D-ribosyl)-5'-AMP + H2O = 1-(5-phospho-beta-D-ribosyl)-5-[(5-phospho-beta-D-ribosylamino)methylideneamino]imidazole-4-carboxamide. The enzyme catalyses 1-(5-phospho-beta-D-ribosyl)-ATP + H2O = 1-(5-phospho-beta-D-ribosyl)-5'-AMP + diphosphate + H(+). Its pathway is amino-acid biosynthesis; L-histidine biosynthesis; L-histidine from 5-phospho-alpha-D-ribose 1-diphosphate: step 2/9. It functions in the pathway amino-acid biosynthesis; L-histidine biosynthesis; L-histidine from 5-phospho-alpha-D-ribose 1-diphosphate: step 3/9. The polypeptide is Histidine biosynthesis bifunctional protein his7 (Schizosaccharomyces pombe (strain 972 / ATCC 24843) (Fission yeast)).